The sequence spans 254 residues: Alcohol dehydrogenase (254 aa).

10–33 (FVAGLGGIGLDTSREIVKSGPKNL) contributes to the NAD(+) binding site. Residue Ser-138 coordinates substrate. Tyr-151 acts as the Proton acceptor in catalysis.

The protein belongs to the short-chain dehydrogenases/reductases (SDR) family. As to quaternary structure, homodimer.

The catalysed reaction is a primary alcohol + NAD(+) = an aldehyde + NADH + H(+). It catalyses the reaction a secondary alcohol + NAD(+) = a ketone + NADH + H(+). The sequence is that of Alcohol dehydrogenase (Adh) from Drosophila borealis (Fruit fly).